The primary structure comprises 611 residues: Protein spaetzle 3 (611 aa).

A signal peptide spans 1–14 (MALTNFSLPFGALG). Asparagine 5 carries N-linked (GlcNAc...) asparagine glycosylation. Positions 57-322 (EYFKNNPYAP…NDKSNNNQMP (266 aa)) are disordered. 3 stretches are compositionally biased toward low complexity: residues 104–120 (QQVQQTQQQQTQQQHQQ), 127–153 (SVSFQSSSSRSSSSSTTGQSSIQLTQT), and 169–185 (PGQQAQPPQQQQPQQKQ). Residues 191 to 210 (GSASATFTKNSGSFSITSFG) are compositionally biased toward polar residues. A compositionally biased stretch (pro residues) spans 218-239 (PPQPQQPPPSQQQQPPPAPPPQ). Positions 288–306 (YDVEEGEEDEEEDGEEEGQ) are enriched in acidic residues. Asparagine 335 and asparagine 351 each carry an N-linked (GlcNAc...) asparagine glycan. Positions 477–518 (KKRQAAAGGSRNRGGSAGGSGNGNTNANRQPGNKNGSSGTGR) are disordered. The segment covering 487 to 498 (RNRGGSAGGSGN) has biased composition (gly residues). Asparagine 511 carries an N-linked (GlcNAc...) asparagine glycan. In terms of domain architecture, Spaetzle spans 521-609 (ACESKIEIVT…LFPSCCVCRC (89 aa)). 3 disulfides stabilise this stretch: cysteine 522–cysteine 573, cysteine 559–cysteine 605, and cysteine 567–cysteine 607.

Homodimer; disulfide-linked.

Functionally, neurotrophin which may function as a ligand to the Toll-related receptor Tollo. Involved in a Tollo and JNK signaling pathway that positively regulates neuromuscular junction (NMJ) growth in presynaptic motorneurons. May function by activating Tollo to promote the phosphorylation of JNK. This is Protein spaetzle 3 from Drosophila melanogaster (Fruit fly).